The sequence spans 452 residues: RNA polymerase II-associated protein rba50 (452 aa).

Disordered regions lie at residues 60 to 83 (LRKN…IDEE), 125 to 202 (EREL…QTKR), and 223 to 261 (PIKG…PLEF). Basic and acidic residues predominate over residues 125–135 (ERELAQRKDRS). The span at 136 to 154 (SQVNTPDLSQRPSDDSFLS) shows a compositional bias: polar residues. A compositionally biased stretch (basic and acidic residues) spans 156–165 (EKLRSSEKLN). The segment covering 170 to 191 (SVLSSEAVDSSSGSPSPPMALS) has biased composition (low complexity).

This sequence belongs to the RPAP1 family. Interacts with RNA polymerase II.

It localises to the cytoplasm. The protein resides in the nucleus. Its function is as follows. Forms an interface between the RNA polymerase II enzyme and chaperone/scaffolding proteins, suggesting that it is required to connect RNA polymerase II to regulators of protein complex formation. This chain is RNA polymerase II-associated protein rba50 (rba50), found in Schizosaccharomyces pombe (strain 972 / ATCC 24843) (Fission yeast).